The sequence spans 215 residues: Large ribosomal subunit protein bL25 (215 aa).

The segment at 170-215 (DPDTSVASVTPPTTEEDLDTDDVDENAEPELVGAENDSADEESENK) is disordered. Acidic residues-rich tracts occupy residues 183-197 (TEED…ENAE) and 206-215 (DSADEESENK).

This sequence belongs to the bacterial ribosomal protein bL25 family. CTC subfamily. Part of the 50S ribosomal subunit; part of the 5S rRNA/L5/L18/L25 subcomplex. Contacts the 5S rRNA. Binds to the 5S rRNA independently of L5 and L18.

Functionally, this is one of the proteins that binds to the 5S RNA in the ribosome where it forms part of the central protuberance. This is Large ribosomal subunit protein bL25 from Oceanobacillus iheyensis (strain DSM 14371 / CIP 107618 / JCM 11309 / KCTC 3954 / HTE831).